A 154-amino-acid chain; its full sequence is 6,7-dimethyl-8-ribityllumazine synthase (154 aa).

Residues Phe23, 57–59 (AYE), and 81–83 (AVI) each bind 5-amino-6-(D-ribitylamino)uracil. 86–87 (AT) is a binding site for (2S)-2-hydroxy-3-oxobutyl phosphate. The Proton donor role is filled by His89. Residue Phe114 participates in 5-amino-6-(D-ribitylamino)uracil binding. Residue Arg128 coordinates (2S)-2-hydroxy-3-oxobutyl phosphate.

This sequence belongs to the DMRL synthase family.

It catalyses the reaction (2S)-2-hydroxy-3-oxobutyl phosphate + 5-amino-6-(D-ribitylamino)uracil = 6,7-dimethyl-8-(1-D-ribityl)lumazine + phosphate + 2 H2O + H(+). The protein operates within cofactor biosynthesis; riboflavin biosynthesis; riboflavin from 2-hydroxy-3-oxobutyl phosphate and 5-amino-6-(D-ribitylamino)uracil: step 1/2. Functionally, catalyzes the formation of 6,7-dimethyl-8-ribityllumazine by condensation of 5-amino-6-(D-ribitylamino)uracil with 3,4-dihydroxy-2-butanone 4-phosphate. This is the penultimate step in the biosynthesis of riboflavin. This chain is 6,7-dimethyl-8-ribityllumazine synthase, found in Desulforamulus reducens (strain ATCC BAA-1160 / DSM 100696 / MI-1) (Desulfotomaculum reducens).